Here is a 50-residue protein sequence, read N- to C-terminus: Small ribosomal subunit protein uS14 (50 aa).

Cysteine 15, cysteine 18, cysteine 33, and cysteine 36 together coordinate Zn(2+).

This sequence belongs to the universal ribosomal protein uS14 family. Zinc-binding uS14 subfamily. Part of the 30S ribosomal subunit. The cofactor is Zn(2+).

Its function is as follows. Binds 16S rRNA, required for the assembly of 30S particles. The protein is Small ribosomal subunit protein uS14 of Methanothermobacter thermautotrophicus (strain ATCC 29096 / DSM 1053 / JCM 10044 / NBRC 100330 / Delta H) (Methanobacterium thermoautotrophicum).